The chain runs to 362 residues: Probable dual-specificity RNA methyltransferase RlmN (362 aa).

The active-site Proton acceptor is Glu-105. Residues 111–344 (HNYGNSVCVT…VTIRREQGHD (234 aa)) form the Radical SAM core domain. Cys-118 and Cys-349 are joined by a disulfide. 3 residues coordinate [4Fe-4S] cluster: Cys-125, Cys-129, and Cys-132. Residues 175–176 (GE), Ser-207, 230–232 (SLH), and Asn-306 each bind S-adenosyl-L-methionine. The active-site S-methylcysteine intermediate is the Cys-349.

Belongs to the radical SAM superfamily. RlmN family. [4Fe-4S] cluster serves as cofactor.

The protein resides in the cytoplasm. The enzyme catalyses adenosine(2503) in 23S rRNA + 2 reduced [2Fe-2S]-[ferredoxin] + 2 S-adenosyl-L-methionine = 2-methyladenosine(2503) in 23S rRNA + 5'-deoxyadenosine + L-methionine + 2 oxidized [2Fe-2S]-[ferredoxin] + S-adenosyl-L-homocysteine. It catalyses the reaction adenosine(37) in tRNA + 2 reduced [2Fe-2S]-[ferredoxin] + 2 S-adenosyl-L-methionine = 2-methyladenosine(37) in tRNA + 5'-deoxyadenosine + L-methionine + 2 oxidized [2Fe-2S]-[ferredoxin] + S-adenosyl-L-homocysteine. Its function is as follows. Specifically methylates position 2 of adenine 2503 in 23S rRNA and position 2 of adenine 37 in tRNAs. The sequence is that of Probable dual-specificity RNA methyltransferase RlmN from Halalkalibacterium halodurans (strain ATCC BAA-125 / DSM 18197 / FERM 7344 / JCM 9153 / C-125) (Bacillus halodurans).